Reading from the N-terminus, the 90-residue chain is Probable Fe(2+)-trafficking protein (90 aa).

Belongs to the Fe(2+)-trafficking protein family. As to quaternary structure, monomer.

Its function is as follows. Could be a mediator in iron transactions between iron acquisition and iron-requiring processes, such as synthesis and/or repair of Fe-S clusters in biosynthetic enzymes. The sequence is that of Probable Fe(2+)-trafficking protein from Pectobacterium carotovorum subsp. carotovorum (strain PC1).